Reading from the N-terminus, the 314-residue chain is Melanoma-associated antigen 2 (314 aa).

Over residues 1-20 (MPLEQRSQHCKPEEGLEARG) the composition is skewed to basic and acidic residues. A disordered region spans residues 1–69 (MPLEQRSQHC…SPPHSPQGAS (69 aa)). The segment covering 21–44 (EALGLVGAQAPATEEQQTASSSST) has biased composition (low complexity). Position 64 is a phosphoserine (S64). The region spanning 109-308 (ISRKMVELVH…ISYPPLHERA (200 aa)) is the MAGE domain.

Interacts with TRIM28 and UBE2H. Interacts with HDAC3. Interacts with PML (isoform PML-1, isoform PML-2, isoform PML-3, isoform PML-4 and isoform PML-5). In terms of tissue distribution, expressed in many tumors of several types, such as melanoma, head and neck squamous cell carcinoma, lung carcinoma and breast carcinoma, but not in normal tissues except for testes.

It localises to the nucleus. Its subcellular location is the PML body. In terms of biological role, reduces p53/TP53 transactivation function through recruitment of HDAC3 to p53/TP53 transcription sites. Also represses p73/TP73 activity. Proposed to enhance ubiquitin ligase activity of RING-type zinc finger-containing E3 ubiquitin-protein ligases. In vitro enhances ubiquitin ligase activity of TRIM28 and stimulates p53/TP53 ubiquitination by TRIM28 potentially in presence of Ubl-conjugating enzyme UBE2H. Proposed to act through recruitment and/or stabilization of the Ubl-conjugating enzyme (E2) at the E3:substrate complex. May play a role in embryonal development and tumor transformation or aspects of tumor progression. In vitro promotes cell viability in melanoma cell lines. Antigen recognized on a melanoma by autologous cytolytic T-lymphocytes. Negatively regulates acetylation and sumoylation of PML and represses PML-induced p53/TP53 acetylation and activation. The protein is Melanoma-associated antigen 2 (MAGEA2) of Homo sapiens (Human).